A 73-amino-acid polypeptide reads, in one-letter code: Small ribosomal subunit protein bS18 (73 aa).

It belongs to the bacterial ribosomal protein bS18 family. As to quaternary structure, part of the 30S ribosomal subunit. Forms a tight heterodimer with protein bS6.

Binds as a heterodimer with protein bS6 to the central domain of the 16S rRNA, where it helps stabilize the platform of the 30S subunit. This is Small ribosomal subunit protein bS18 from Coxiella burnetii (strain Dugway 5J108-111).